Consider the following 421-residue polypeptide: 4-hydroxy-3-methylbut-2-en-1-yl diphosphate synthase (flavodoxin) (421 aa).

The [4Fe-4S] cluster site is built by Cys-311, Cys-314, Cys-357, and Glu-364.

The protein belongs to the IspG family. The cofactor is [4Fe-4S] cluster.

The catalysed reaction is (2E)-4-hydroxy-3-methylbut-2-enyl diphosphate + oxidized [flavodoxin] + H2O + 2 H(+) = 2-C-methyl-D-erythritol 2,4-cyclic diphosphate + reduced [flavodoxin]. It functions in the pathway isoprenoid biosynthesis; isopentenyl diphosphate biosynthesis via DXP pathway; isopentenyl diphosphate from 1-deoxy-D-xylulose 5-phosphate: step 5/6. Its function is as follows. Converts 2C-methyl-D-erythritol 2,4-cyclodiphosphate (ME-2,4cPP) into 1-hydroxy-2-methyl-2-(E)-butenyl 4-diphosphate. The chain is 4-hydroxy-3-methylbut-2-en-1-yl diphosphate synthase (flavodoxin) from Stenotrophomonas maltophilia (strain K279a).